Consider the following 311-residue polypeptide: Pyrimidine-specific ribonucleoside hydrolase RihA (311 aa).

Residue H240 is part of the active site.

The protein belongs to the IUNH family. RihA subfamily.

Hydrolyzes with equal efficiency cytidine or uridine to ribose and cytosine or uracil, respectively. The chain is Pyrimidine-specific ribonucleoside hydrolase RihA from Escherichia coli O127:H6 (strain E2348/69 / EPEC).